A 142-amino-acid chain; its full sequence is Large-conductance mechanosensitive channel (142 aa).

2 helical membrane passes run 14-34 (VMDLAVGVIIGAAFSKIVDSV) and 82-102 (GNFITVFINFLILAWIIFLLI).

This sequence belongs to the MscL family. In terms of assembly, homopentamer.

It is found in the cell inner membrane. Channel that opens in response to stretch forces in the membrane lipid bilayer. May participate in the regulation of osmotic pressure changes within the cell. The protein is Large-conductance mechanosensitive channel of Sinorhizobium medicae (strain WSM419) (Ensifer medicae).